A 284-amino-acid polypeptide reads, in one-letter code: 4-hydroxybenzoate octaprenyltransferase (284 aa).

7 helical membrane passes run 13 to 32 (FNRP…ALWL), 90 to 110 (ALML…FTDL), 112 to 132 (TILL…MKRY), 134 to 154 (HLPQ…AYSA), 164 to 184 (LWML…YYAM), 200 to 220 (ILFG…TLSL), and 224 to 244 (IGLL…CVGL).

This sequence belongs to the UbiA prenyltransferase family. The cofactor is Mg(2+).

It is found in the cell inner membrane. It catalyses the reaction all-trans-octaprenyl diphosphate + 4-hydroxybenzoate = 4-hydroxy-3-(all-trans-octaprenyl)benzoate + diphosphate. Its pathway is cofactor biosynthesis; ubiquinone biosynthesis. Its function is as follows. Catalyzes the prenylation of para-hydroxybenzoate (PHB) with an all-trans polyprenyl group. Mediates the second step in the final reaction sequence of ubiquinone-8 (UQ-8) biosynthesis, which is the condensation of the polyisoprenoid side chain with PHB, generating the first membrane-bound Q intermediate 3-octaprenyl-4-hydroxybenzoate. The chain is 4-hydroxybenzoate octaprenyltransferase from Marinomonas sp. (strain MWYL1).